A 150-amino-acid polypeptide reads, in one-letter code: Endoribonuclease YbeY (150 aa).

H113, H117, and H123 together coordinate Zn(2+).

It belongs to the endoribonuclease YbeY family. Requires Zn(2+) as cofactor.

The protein localises to the cytoplasm. Its function is as follows. Single strand-specific metallo-endoribonuclease involved in late-stage 70S ribosome quality control and in maturation of the 3' terminus of the 16S rRNA. The protein is Endoribonuclease YbeY of Syntrophotalea carbinolica (strain DSM 2380 / NBRC 103641 / GraBd1) (Pelobacter carbinolicus).